The following is a 947-amino-acid chain: Leucine-rich repeat-containing protein 37B (947 aa).

A signal peptide spans 1-27 (MSWLRFWGPWPLLTWQLLSLLVKEAQP). At 28 to 905 (LVWVKDPLQL…EVPGDDYKNK (878 aa)) the chain is on the extracellular side. 4 disordered regions span residues 42-88 (LGPP…ALPQ), 226-257 (YLSM…QVGL), 294-458 (EVEP…PEPT), and 484-514 (SLTE…EQKA). A compositionally biased stretch (polar residues) spans 311-320 (SMESLAQTPL). Asn-358 is a glycosylation site (N-linked (GlcNAc...) asparagine). Polar residues-rich tracts occupy residues 404–415 (GQAQHSHLTEAT), 436–445 (SPTTEETSAQ), and 495–507 (LESS…QSET). LRR repeat units follow at residues 556–577 (IFTT…VWKA), 580–601 (WTEK…SFEG), 604–625 (YLQY…TFES), 628–649 (FLQY…TFQA), 655–676 (FLHN…YLFE), and 679–699 (ALKY…KNIL). The N-linked (GlcNAc...) asparagine glycan is linked to Asn-789. A coiled-coil region spans residues 867 to 897 (DTDQQKTNYINENMEQNEQKEQKSSELMKEV). The helical transmembrane segment at 906–926 (LIFAISVTVILIILIIIFCLI) threads the bilayer. Topologically, residues 927-947 (EVNSHKRASEKYKDNPSISGA) are cytoplasmic.

The protein resides in the membrane. This is Leucine-rich repeat-containing protein 37B (LRRC37B) from Homo sapiens (Human).